Consider the following 447-residue polypeptide: Putative branched-chain amino acid carrier protein SAUSA300_1300 (447 aa).

12 helical membrane-spanning segments follow: residues Trp6–Pro26, Ile40–Leu60, Pro74–Ile94, Ser114–Leu134, Ile143–Tyr163, Gly193–Val213, Leu229–Ile249, Leu290–Val310, Phe326–Ile346, Ile350–Ala370, Ile382–Leu402, and Leu417–Val437.

It belongs to the branched chain amino acid transporter family.

Its subcellular location is the cell membrane. Functionally, component of the transport system for branched-chain amino acids (leucine, isoleucine and valine), which is coupled to a proton motive force (Potential). Contributes to NaCl tolerance. The protein is Putative branched-chain amino acid carrier protein SAUSA300_1300 of Staphylococcus aureus (strain USA300).